Reading from the N-terminus, the 723-residue chain is Heme/hemopexin utilization protein C (723 aa).

An N-terminal signal peptide occupies residues Met-1 to Ala-21. The TBDR plug domain occupies Asp-36–Pro-147. Residues Lys-158–Phe-723 form the TBDR beta-barrel domain. Residues Ser-706–Phe-723 carry the TonB C-terminal box motif.

This sequence belongs to the TonB-dependent receptor family.

It is found in the cell outer membrane. Its function is as follows. Required for utilization of free heme at low concentrations. In Haemophilus influenzae (strain ATCC 51907 / DSM 11121 / KW20 / Rd), this protein is Heme/hemopexin utilization protein C (hxuC).